We begin with the raw amino-acid sequence, 431 residues long: Protein translocase subunit SecY (431 aa).

Transmembrane regions (helical) follow at residues 18 to 38, 64 to 84, 116 to 136, 146 to 166, 175 to 195, 214 to 234, 262 to 282, 309 to 329, 369 to 389, and 390 to 410; these read IIFTLLMLIVFRLGSFIPVPH, LFNFSILAMGIMPYITASIII, FTIVLGFIQALGMSYGFNNMA, VGTYLLIAIVLTAGTAFLMWL, VGNGISIIIFAGIVAGIPQTI, IIKVVVILVAILAIVVGVIFI, LPLKVNPAGVIPVIFAVAFIT, PVGMGVYAALIIAFTYFYAFV, FVGSIFLAVIAILPVLFVNIA, and GLPSSAQIGGTSLLIVIGVAL.

It belongs to the SecY/SEC61-alpha family. In terms of assembly, component of the Sec protein translocase complex. Heterotrimer consisting of SecY, SecE and SecG subunits. The heterotrimers can form oligomers, although 1 heterotrimer is thought to be able to translocate proteins. Interacts with the ribosome. Interacts with SecDF, and other proteins may be involved. Interacts with SecA.

It localises to the cell membrane. In terms of biological role, the central subunit of the protein translocation channel SecYEG. Consists of two halves formed by TMs 1-5 and 6-10. These two domains form a lateral gate at the front which open onto the bilayer between TMs 2 and 7, and are clamped together by SecE at the back. The channel is closed by both a pore ring composed of hydrophobic SecY resides and a short helix (helix 2A) on the extracellular side of the membrane which forms a plug. The plug probably moves laterally to allow the channel to open. The ring and the pore may move independently. This Bacillus licheniformis (strain ATCC 14580 / DSM 13 / JCM 2505 / CCUG 7422 / NBRC 12200 / NCIMB 9375 / NCTC 10341 / NRRL NRS-1264 / Gibson 46) protein is Protein translocase subunit SecY.